A 178-amino-acid chain; its full sequence is ATP-dependent protease subunit HslV (178 aa).

Thr-7 is a catalytic residue. Gly-162, Cys-165, and Thr-168 together coordinate Na(+).

This sequence belongs to the peptidase T1B family. HslV subfamily. In terms of assembly, a double ring-shaped homohexamer of HslV is capped on each side by a ring-shaped HslU homohexamer. The assembly of the HslU/HslV complex is dependent on binding of ATP.

It is found in the cytoplasm. The catalysed reaction is ATP-dependent cleavage of peptide bonds with broad specificity.. Its activity is regulated as follows. Allosterically activated by HslU binding. Protease subunit of a proteasome-like degradation complex believed to be a general protein degrading machinery. The chain is ATP-dependent protease subunit HslV from Paraburkholderia xenovorans (strain LB400).